We begin with the raw amino-acid sequence, 658 residues long: Transcription factor E2-alpha (658 aa).

Disordered regions lie at residues 42 to 82 (STQF…GTHY), 140 to 191 (SALS…YPAN), 276 to 313 (NPSV…GTAT), 331 to 372 (DHSS…SYDG), 460 to 558 (VPAQ…ERRV), and 628 to 658 (EEEK…VGHM). The Nuclear localization signal signature appears at 173 to 179 (PKKVRKV). Residues 276–303 (NPSVTSSFSSTPAQYGVSSHTPPISTGD) show a composition bias toward polar residues. Positions 333-344 (SSTNFSSTPSTP) are enriched in low complexity. Polar residues predominate over residues 345-355 (VGSPQGITGSG). Over residues 493 to 507 (PDIKRESKEDEENRS) the composition is skewed to basic and acidic residues. The segment covering 533-544 (QDEDEDEDDDNL) has biased composition (acidic residues). Residues 548–558 (QKAEREKERRV) are compositionally biased toward basic and acidic residues. The region spanning 555–608 (ERRVANNARERLRVKDINEAFKELGRMCQLHLNSEKPQTKLLILHQAVSVILSL) is the bHLH domain.

Homodimer. Heterodimer; efficient DNA binding requires dimerization with another bHLH protein. Interacts with tgfb1i1.

It is found in the nucleus. Its function is as follows. Transcriptional regulator involved in the initiation of neuronal differentiation and mesenchymal to epithelial transition. Heterodimers between tcf3 and tissue-specific basic helix-loop-helix (bHLH) proteins play major roles in determining tissue-specific cell fate during embryogenesis, like muscle or early B-cell differentiation. Together with tcf15, required for the mesenchymal to epithelial transition. Dimers bind DNA on E-box motifs: 5'-CANNTG-3'. In Xenopus laevis (African clawed frog), this protein is Transcription factor E2-alpha (tcf3).